The following is a 452-amino-acid chain: Phosphatidylserine synthase 2 (452 aa).

Residues 1–35 are Cytoplasmic-facing; sequence MAKGEWKRSGADDLPLPGRSECEVFDDGTNTFFWR. A helical membrane pass occupies residues 36-56; sequence AHTVTVLFILTCALVYVTLLE. Topologically, residues 57–69 are lumenal; the sequence is ETPHDTAYNTKRG. A helical transmembrane segment spans residues 70 to 90; the sequence is IVASILVFLCFGVTQAKDGPF. The Cytoplasmic segment spans residues 91–99; it reads TRPHPAYWR. The helical transmembrane segment at 100–120 threads the bilayer; the sequence is FWLCVSVVYELFLIFILFQTV. Residues 121 to 286 are Lumenal-facing; sequence HDGRQFMKYI…EWRPASNLRR (166 aa). A helical transmembrane segment spans residues 287–307; that stretch reads WLAVLGIIFMFLLAELNTFYL. Lys-308 is a topological domain (cytoplasmic). Residues 309 to 329 traverse the membrane as a helical segment; the sequence is FVMWMPPEHYLVLFRLVFFVN. Over 330–349 the chain is Lumenal; the sequence is VGGVAMREIYDFMDDPKFHK. Residues 350 to 370 form a helical membrane-spanning segment; that stretch reads KLGQQAWIVAAITVTEFLIVV. The Cytoplasmic portion of the chain corresponds to 371-376; sequence KYDPNT. The helical transmembrane segment at 377-397 threads the bilayer; it reads IMLPIPFFITQCWILGIALIL. Over 398–452 the chain is Lumenal; that stretch reads VWTLWRFFIRDITLRYKETRRRRQEVSSERDGSSSAPSGRSKLNGSMDSVRHRKS. A disordered region spans residues 419 to 452; that stretch reads RRQEVSSERDGSSSAPSGRSKLNGSMDSVRHRKS. The span at 430–444 shows a compositional bias: polar residues; that stretch reads SSSAPSGRSKLNGSM.

It belongs to the phosphatidyl serine synthase family.

It localises to the endoplasmic reticulum membrane. It catalyses the reaction a 1,2-diacyl-sn-glycero-3-phosphoethanolamine + L-serine = a 1,2-diacyl-sn-glycero-3-phospho-L-serine + ethanolamine. The enzyme catalyses 1-hexadecanoyl-2-(9Z-octadecenoyl)-sn-glycero-3-phosphoethanolamine + L-serine = 1-hexadecanoyl-2-(9Z-octadecenoyl)-sn-glycero-3-phospho-L-serine + ethanolamine. The catalysed reaction is 1-hexadecanoyl-2-(4Z,7Z,10Z,13Z,16Z,19Z-docosahexaenoyl)-sn-glycero-3-phosphoethanolamine + L-serine = 1-hexadecanoyl-2-(4Z,7Z,10Z,13Z,16Z,19Z-docosahexaenoyl)-sn-glycero-3-phosphoserine + ethanolamine. It carries out the reaction 1-octadecanoyl-2-(5Z,8Z,11Z,14Z)-eicosatetraenoyl-sn-glycero-3-phosphoethanolamine + L-serine = 1-octadecanoyl-2-(5Z,8Z,11Z,14Z)-eicosatetraenoyl-sn-glycero-3-phosphoserine + ethanolamine. It catalyses the reaction 1-octadecanoyl-2-(4Z,7Z,10Z,13Z,16Z,19Z-docosahexaenoyl)-sn-glycero-3-phosphoethanolamine + L-serine = 1-octadecanoyl-2-(4Z,7Z,10Z,13Z,16Z,19Z-docosahexaenoyl)-sn-glycero-3-phosphoserine + ethanolamine. The enzyme catalyses 1-(1Z-octadecenyl)-2-(4Z,7Z,10Z,13Z,16Z,19Z-docosahexaenoyl)-sn-glycero-3-phosphoethanolamine + L-serine = 1-(1Z-octadecenyl)-2-(4Z,7Z,10Z,13Z,16Z,19Z-docosahexaenoyl)-sn-glycero-3-phospho-L-serine + ethanolamine. The catalysed reaction is 1-octadecanoyl-2-(9Z-octadecenoyl)-sn-glycero-3-phosphoethanolamine + L-serine = 1-octadecanoyl-2-(9Z-octadecenoyl)-sn-glycero-3-phospho-L-serine + ethanolamine. It carries out the reaction 1-(1Z-octadecenyl)-2-(9Z-octadecenoyl)-sn-glycero-3-phosphoethanolamine + L-serine = 1-(1Z-octadecenyl)-2-(9Z-octadecenoyl)-sn-glycero-3-phospho-L-serine + ethanolamine. It catalyses the reaction 1-(1Z-octadecenyl)-2-(5Z,8Z,11Z,14Z- eicosatetraenoyl)-sn-glycero-3-phosphoethanolamine + L-serine = 1-(1Z-octadecenyl)-2-(5Z,8Z,11Z,14Z-eicosatetraenoyl)-sn-glycero-3-phospho-L-serine + ethanolamine. Its pathway is phospholipid metabolism; phosphatidylserine biosynthesis. Catalyzes a base-exchange reaction in which the polar head group of phosphatidylethanolamine (PE) or phosphatidylcholine (PC) is replaced by L-serine. Catalyzes the conversion of phosphatatidylethanolamine and does not act on phosphatidylcholine. Can utilize both phosphatidylethanolamine (PE) plasmalogen and diacyl PE as substrate and the latter is six times better utilized, indicating the importance of an ester linkage at the sn-1 position. Although it shows no sn-1 fatty acyl preference, exhibits significant preference towards docosahexaenoic acid (22:6n-3) compared with 18:1 or 20:4 at the sn-2 position. The sequence is that of Phosphatidylserine synthase 2 (ptdss2) from Danio rerio (Zebrafish).